We begin with the raw amino-acid sequence, 561 residues long: Rho guanine nucleotide exchange factor 9 (561 aa).

In terms of domain architecture, SH3 spans 53–112 (DSIVSAEAVWDHVTMANRELAFKAGDVIKVLDASNKDWWWGQIDDEEGWFPASFVRLWVN). Residues 145 to 155 (RDQMRANVINE) are interaction with GPHN. One can recognise a DH domain in the interval 148–332 (MRANVINEIM…RNVTQQINER (185 aa)). The 108-residue stretch at 363 to 470 (ELIYTGEMAW…WLRAFREERK (108 aa)) folds into the PH domain. Residues 499–524 (KQKGVNSARSVPPSYPPPQDPLNQGQ) are disordered. Ser-547 is subject to Phosphoserine.

As to quaternary structure, interacts with GPHN.

Its subcellular location is the cytoplasm. It localises to the postsynaptic density. Its function is as follows. Acts as a guanine nucleotide exchange factor (GEF) for CDC42. Promotes formation of GPHN clusters. The sequence is that of Rho guanine nucleotide exchange factor 9 (ARHGEF9) from Bos taurus (Bovine).